The primary structure comprises 504 residues: MSKEDNVINNFEEQANELMKERFQKLKELQSNGKDPFDVYKVERTHTSKEVKDNYEDLEGKTVTVAGRLMSKRVHGKAGFSDIHDRYGKIQLYIKINDVGEEKLKEYKTFDIGDIISVTGTVFKTKTGETSIHITDFQLVCKSLRPLPEKWHGLKDPDLRYRQRYVDLIINQDVRDTFIKRTAIIKSMREFLDNRGFLEVETPILSPIAGGAAAKPFITHHNALDIDMYLRIATELYLKRLIVGGFEKVYEIGKNFRNEGIDIRHNPEFTAIELYEAYADYNDMMEITENMIAYICEKVLGTTKVEYEGAEIDFTPPWRRLTMVDAVKEYAGVDFNIIKDDIEARAIAKEKHIEFKKELKDCTKGDVLIGLFEEFCEDKLMQPTFICDYPVENSPLTKKKRGNEAFTERFEGFVFGREVCNAYSELNDSIVQKERFMQQLKERELGDDEAYMMDDDFITSLEVGMPPTGGLGIGIDRLIMFLTDTHSIRDVILFPTMKPQPNNQ.

Mg(2+)-binding residues include glutamate 411 and glutamate 418.

This sequence belongs to the class-II aminoacyl-tRNA synthetase family. Homodimer. The cofactor is Mg(2+).

It is found in the cytoplasm. The catalysed reaction is tRNA(Lys) + L-lysine + ATP = L-lysyl-tRNA(Lys) + AMP + diphosphate. The chain is Lysine--tRNA ligase from Clostridium botulinum (strain Loch Maree / Type A3).